We begin with the raw amino-acid sequence, 486 residues long: N-succinylglutamate 5-semialdehyde dehydrogenase (486 aa).

An NAD(+)-binding site is contributed by 220–225 (GSSRTG). Catalysis depends on residues Glu243 and Cys277.

It belongs to the aldehyde dehydrogenase family. AstD subfamily.

It carries out the reaction N-succinyl-L-glutamate 5-semialdehyde + NAD(+) + H2O = N-succinyl-L-glutamate + NADH + 2 H(+). It functions in the pathway amino-acid degradation; L-arginine degradation via AST pathway; L-glutamate and succinate from L-arginine: step 4/5. Functionally, catalyzes the NAD-dependent reduction of succinylglutamate semialdehyde into succinylglutamate. The protein is N-succinylglutamate 5-semialdehyde dehydrogenase of Shewanella baltica (strain OS155 / ATCC BAA-1091).